We begin with the raw amino-acid sequence, 437 residues long: tRNA-2-methylthio-N(6)-dimethylallyladenosine synthase (437 aa).

In terms of domain architecture, MTTase N-terminal spans 2–117; it reads KHLYIKTFGC…LPQMIQRALD (116 aa). Positions 11, 48, 80, 154, 158, and 161 each coordinate [4Fe-4S] cluster. The 233-residue stretch at 140-372 folds into the Radical SAM core domain; that stretch reads RAQGVVGQVT…QQLLNTQQLQ (233 aa). In terms of domain architecture, TRAM spans 375 to 437; that stretch reads KARVGRRESV…LPNSLRGRLV (63 aa).

It belongs to the methylthiotransferase family. MiaB subfamily. Monomer. [4Fe-4S] cluster is required as a cofactor.

Its subcellular location is the cytoplasm. It carries out the reaction N(6)-dimethylallyladenosine(37) in tRNA + (sulfur carrier)-SH + AH2 + 2 S-adenosyl-L-methionine = 2-methylsulfanyl-N(6)-dimethylallyladenosine(37) in tRNA + (sulfur carrier)-H + 5'-deoxyadenosine + L-methionine + A + S-adenosyl-L-homocysteine + 2 H(+). Catalyzes the methylthiolation of N6-(dimethylallyl)adenosine (i(6)A), leading to the formation of 2-methylthio-N6-(dimethylallyl)adenosine (ms(2)i(6)A) at position 37 in tRNAs that read codons beginning with uridine. This chain is tRNA-2-methylthio-N(6)-dimethylallyladenosine synthase, found in Magnetococcus marinus (strain ATCC BAA-1437 / JCM 17883 / MC-1).